A 295-amino-acid polypeptide reads, in one-letter code: uncharacterized protein (295 aa).

A Resolvase/invertase-type recombinase catalytic domain is found at 151 to 290 (RTAVCARLSS…RAVAAAARAG (140 aa)). Serine 159 (O-(5'-phospho-DNA)-serine intermediate) is an active-site residue.

This is an uncharacterized protein from Mycobacterium bovis (strain ATCC BAA-935 / AF2122/97).